A 265-amino-acid polypeptide reads, in one-letter code: MLAYPRIDPVAVSIGPLQFRWYGLMYLFGFISGWWLGRRRAAQPGSGWHPQQVDDMVTWAIFGVVLGGRLGYILFYDLAYYASQPAAIFQIWHGGMSFHGGLLGVLFAVWLYARRAEREFLSVVDFVAPLIPPGLFFGRIGNFINGELWGAPTTLPWAMVFPDGGPFPRHPSQLYEAVLEGVVLFAAVWWFSGRKRPVGAVSGLFGVLYAIFRFAVEFVREPDPQLGYLAFGWLTMGQVLCLPLFGVGMWLLLRNRGAAEGPAAR.

7 consecutive transmembrane segments (helical) span residues 11–31 (AVSI…FGFI), 56–76 (MVTW…ILFY), 91–111 (IWHG…AVWL), 120–140 (FLSV…FGRI), 173–193 (QLYE…WFSG), 198–218 (VGAV…AVEF), and 233–253 (WLTM…WLLL). An a 1,2-diacyl-sn-glycero-3-phospho-(1'-sn-glycerol)-binding site is contributed by Arg-139.

This sequence belongs to the Lgt family.

Its subcellular location is the cell inner membrane. The catalysed reaction is L-cysteinyl-[prolipoprotein] + a 1,2-diacyl-sn-glycero-3-phospho-(1'-sn-glycerol) = an S-1,2-diacyl-sn-glyceryl-L-cysteinyl-[prolipoprotein] + sn-glycerol 1-phosphate + H(+). It functions in the pathway protein modification; lipoprotein biosynthesis (diacylglyceryl transfer). Functionally, catalyzes the transfer of the diacylglyceryl group from phosphatidylglycerol to the sulfhydryl group of the N-terminal cysteine of a prolipoprotein, the first step in the formation of mature lipoproteins. The chain is Phosphatidylglycerol--prolipoprotein diacylglyceryl transferase from Nitratidesulfovibrio vulgaris (strain DSM 19637 / Miyazaki F) (Desulfovibrio vulgaris).